Consider the following 92-residue polypeptide: Small ribosomal subunit protein uS19c (92 aa).

This sequence belongs to the universal ribosomal protein uS19 family.

The protein resides in the plastid. Its subcellular location is the chloroplast. Functionally, protein S19 forms a complex with S13 that binds strongly to the 16S ribosomal RNA. This is Small ribosomal subunit protein uS19c from Fagopyrum esculentum subsp. ancestrale (Wild buckwheat).